A 278-amino-acid polypeptide reads, in one-letter code: Polyamine aminopropyltransferase (278 aa).

One can recognise a PABS domain in the interval 3 to 240 (EGWFTEAVED…GWWSATLMVN (238 aa)). Position 33 (glutamine 33) interacts with S-methyl-5'-thioadenosine. Positions 64 and 88 each coordinate spermidine. Residues glutamate 108 and 139–140 (DG) each bind S-methyl-5'-thioadenosine. Residue aspartate 158 is the Proton acceptor of the active site. Residue 158 to 161 (DSTD) participates in spermidine binding. Proline 165 serves as a coordination point for S-methyl-5'-thioadenosine.

This sequence belongs to the spermidine/spermine synthase family. In terms of assembly, homodimer or homotetramer.

The protein localises to the cytoplasm. The enzyme catalyses S-adenosyl 3-(methylsulfanyl)propylamine + putrescine = S-methyl-5'-thioadenosine + spermidine + H(+). It participates in amine and polyamine biosynthesis; spermidine biosynthesis; spermidine from putrescine: step 1/1. Its function is as follows. Catalyzes the irreversible transfer of a propylamine group from the amino donor S-adenosylmethioninamine (decarboxy-AdoMet) to putrescine (1,4-diaminobutane) to yield spermidine. This Halorhodospira halophila (strain DSM 244 / SL1) (Ectothiorhodospira halophila (strain DSM 244 / SL1)) protein is Polyamine aminopropyltransferase.